The following is a 489-amino-acid chain: F-box/LRR-repeat protein 7 (489 aa).

The span at 1 to 31 (MGANNGKQSGSEGKGSSSISSDLSSSTDQTS) shows a compositional bias: low complexity. The interval 1 to 76 (MGANNGKQSG…AVLNGSSTSS (76 aa)) is disordered. Positions 32 to 55 (TKAPKNAATSEDSDLSMRTVSTPS) are enriched in polar residues. Residues 64–76 (SSSAVLNGSSTSS) are compositionally biased toward low complexity. The F-box domain maps to 109–155 (GAPVDILPDHAFLQIFTHLPTNQLCRCARVCRRWYNLAWDPRLWRTI). LRR repeat units follow at residues 168–193 (LRVL…MVSG), 194–219 (CRRL…EVAG), 220–245 (CYNV…DVSG), 251–279 (CISL…DMTD), 280–305 (CFAL…YLRR), 306–331 (CVRL…SVSD), 332–357 (CRFI…SIAH), 358–383 (CSRI…NARG), 384–409 (CEGL…DIGK), 410–435 (CPLV…SLKS), and 436–461 (CESI…NVQD).

Belongs to the FBXL7 family. As to quaternary structure, part of the SCF (SKP1-CUL1-F-box) E3 ubiquitin-protein ligase complex SCF(FBXL7).

The protein resides in the cytoplasm. The protein localises to the cytoskeleton. It localises to the microtubule organizing center. It is found in the centrosome. The protein operates within protein modification; protein ubiquitination. Substrate recognition component of a SCF (SKP1-CUL1-F-box protein) E3 ubiquitin-protein ligase complex which mediates the ubiquitination and subsequent proteasomal degradation of target proteins. The sequence is that of F-box/LRR-repeat protein 7 (fbxl7) from Danio rerio (Zebrafish).